The sequence spans 504 residues: E3 ubiquitin-protein ligase dbl4 (504 aa).

Positions 127–338 (HEGTCEICYD…NNWYTCNRYE (212 aa)) are TRIAD supradomain. Residues Cys-131, Cys-134, Cys-147, His-149, Cys-152, Cys-155, Cys-173, Cys-178, Cys-217, Cys-222, Cys-244, Cys-246, Cys-251, Cys-254, His-259, Cys-264, Cys-291, and Cys-294 each coordinate Zn(2+). The RING-type 1 zinc-finger motif lies at 131 to 178 (CEICYDEGCLPFFSAECDHEFCLACYRQYLDSRISEGESVIQCPEESC). Residues 197-264 (DRYHRLLDRS…GHDNHQPTIC (68 aa)) form an IBR-type zinc finger. The RING-type 2; atypical zinc-finger motif lies at 291–320 (CPKCSTTIEKNGGCNHMTCKKCKYEFCWVC). The active site involves Cys-304. Positions 309, 312, 317, 320, 327, and 334 each coordinate Zn(2+).

Belongs to the RBR family.

It localises to the cytoplasm. Its subcellular location is the nucleus. The enzyme catalyses [E2 ubiquitin-conjugating enzyme]-S-ubiquitinyl-L-cysteine + [acceptor protein]-L-lysine = [E2 ubiquitin-conjugating enzyme]-L-cysteine + [acceptor protein]-N(6)-ubiquitinyl-L-lysine.. It participates in protein modification; protein ubiquitination. In terms of biological role, probable ubiquitin-protein ligase involved in the degradation-related ubiquitination of histones. Contributes to the post-translational regulation of histone protein levels by polyubiquitination of excess histones for subsequent degradation. In Schizosaccharomyces pombe (strain 972 / ATCC 24843) (Fission yeast), this protein is E3 ubiquitin-protein ligase dbl4.